Consider the following 597-residue polypeptide: Protein Spindly (597 aa).

M1 bears the N-acetylmethionine mark. Residues 1–445 (MEADITNLRN…LKLKYEPEER (445 aa)) are a coiled coil. A phosphoserine mark is found at S508 and S547. The segment at 531-597 (PASTEVLHEQ…STPEMQCPQQ (67 aa)) is disordered. Residues 540-549 (QSGNTPSSPR) are compositionally biased toward polar residues. Over residues 550-574 (LTEESRLPTKVKERKEATSKLEKGA) the composition is skewed to basic and acidic residues. Positions 583 to 597 (YVSSKSTPEMQCPQQ) are enriched in polar residues.

This sequence belongs to the Spindly family. As to quaternary structure, interacts with KNTC1 and ZW10. These interactions appear weak and may be transient or indirect. Interacts with dynein intermediate chain and dynactin (DCTN1). Interacts with the catalytically active form of USP45. In terms of processing, monoubiquitinated with'Lys-48' linkage. Deubiquitinated by USP45.

It localises to the cytoplasm. Its subcellular location is the cytoskeleton. The protein resides in the microtubule organizing center. The protein localises to the centrosome. It is found in the chromosome. It localises to the centromere. Its subcellular location is the kinetochore. The protein resides in the nucleus. The protein localises to the spindle pole. Its function is as follows. Required for the localization of dynein and dynactin to the mitotic kintochore. Dynein is believed to control the initial lateral interaction between the kinetochore and spindle microtubules and to facilitate the subsequent formation of end-on kinetochore-microtubule attachments mediated by the NDC80 complex. Also required for correct spindle orientation. Does not appear to be required for the removal of spindle assembly checkpoint (SAC) proteins from the kinetochore upon bipolar spindle attachment. Acts as an adapter protein linking the dynein motor complex to various cargos and converts dynein from a non-processive to a highly processive motor in the presence of dynactin. Facilitates the interaction between dynein and dynactin and activates dynein processivity (the ability to move along a microtubule for a long distance without falling off the track). Plays a role in cell migration. This Rattus norvegicus (Rat) protein is Protein Spindly (Spdl1).